We begin with the raw amino-acid sequence, 209 residues long: Octanoyltransferase (209 aa).

The BPL/LPL catalytic domain occupies 28 to 203 (NATPETLLLL…RFQGLLDEWL (176 aa)). Residues 66-73 (RGGDVTFH), 133-135 (AIG), and 146-148 (GFA) contribute to the substrate site. The active-site Acyl-thioester intermediate is Cys164.

Belongs to the LipB family.

Its subcellular location is the cytoplasm. It carries out the reaction octanoyl-[ACP] + L-lysyl-[protein] = N(6)-octanoyl-L-lysyl-[protein] + holo-[ACP] + H(+). The protein operates within protein modification; protein lipoylation via endogenous pathway; protein N(6)-(lipoyl)lysine from octanoyl-[acyl-carrier-protein]: step 1/2. Its function is as follows. Catalyzes the transfer of endogenously produced octanoic acid from octanoyl-acyl-carrier-protein onto the lipoyl domains of lipoate-dependent enzymes. Lipoyl-ACP can also act as a substrate although octanoyl-ACP is likely to be the physiological substrate. The protein is Octanoyltransferase of Pelobacter propionicus (strain DSM 2379 / NBRC 103807 / OttBd1).